The sequence spans 55 residues: Protein SOX-19 (55 aa).

A DNA-binding region (HMG box) is located at residues 1–55 (MVWSQIERRKIMEQWPDMHNAEISKRLGKRWKLLPDYEKIPFIKEAERLRLKHMA).

The protein resides in the nucleus. The polypeptide is Protein SOX-19 (Sox19) (Mus musculus (Mouse)).